The primary structure comprises 220 residues: Protein DGCR6 (220 aa).

Residues 76-142 adopt a coiled-coil conformation; sequence KSLYNQRLRL…EQRAMDQKIV (67 aa).

It belongs to the gonadal family. Found in all tissues examined with highest expression in liver, heart and skeletal muscle. Lower levels in pancreas and placenta. Weak expression in brain.

It localises to the nucleus. Its function is as follows. May play a role in neural crest cell migration into the third and fourth pharyngeal pouches. This is Protein DGCR6 (DGCR6) from Homo sapiens (Human).